Reading from the N-terminus, the 296-residue chain is m7GpppN-mRNA hydrolase NUDT17 (296 aa).

Residues 90 to 236 (GRGVDVGVAV…DSGSPCGPLP (147 aa)) form the Nudix hydrolase domain. The short motif at 129–150 (GHVELGEQLLEAGLRELQEETG) is the Nudix box element. Glu-144 and Glu-148 together coordinate Mg(2+).

Belongs to the Nudix hydrolase family. Requires Mg(2+) as cofactor. The cofactor is Mn(2+).

The enzyme catalyses a 5'-end (N(7)-methyl 5'-triphosphoguanosine)-ribonucleoside in mRNA + H2O = N(7)-methyl-GDP + a 5'-end phospho-ribonucleoside in mRNA + 2 H(+). In terms of biological role, acts as a decapping enzyme capable of hydrolyzing monomethylated capped RNAs (in vitro). Hydrolyzes monomethylated capped RNA after alpha and beta phosphates to form N(7)-methyl-GDP. Shows low activity towards unmethylated capped RNA. This is m7GpppN-mRNA hydrolase NUDT17 (nudt17) from Xenopus laevis (African clawed frog).